The chain runs to 627 residues: Dual specificity testis-specific protein kinase 1 (627 aa).

The interval 1 to 36 (MAGERPPLRGPGPGEAPGEGPGGAGGGPGRGRPSSY) is disordered. Over residues 11–30 (PGPGEAPGEGPGGAGGGPGR) the composition is skewed to gly residues. The 258-residue stretch at 52–309 (FDCAEKIGAG…TEITQHLEQI (258 aa)) folds into the Protein kinase domain. Residues 58-66 (IGAGFFSEV) and Lys81 each bind ATP. Residue Asp170 is the Proton acceptor of the active site. Ser215 bears the Phosphoserine; by autocatalysis mark. The segment covering 316–330 (ATPLAKPPLTKAPLT) has biased composition (low complexity). Disordered regions lie at residues 316-373 (ATPL…SWGD), 436-485 (RCRS…GLAP), 500-519 (CSSASQPWSPRSGPPLNNNP), and 532-565 (REPWNRAQHSLPRAAALERTEPSPPPSAPREPEE). Arg338 carries the omega-N-methylarginine modification. Basic and acidic residues predominate over residues 348–357 (PDPRLSRSRS). A required for interaction with YWHAB region spans residues 421-525 (VTTPDILVQP…NNNPPAVVVN (105 aa)). The segment at 528 to 625 (QGWAREPWNR…PTPSLQLPGA (98 aa)) is required for interaction with PARVA. The required for interaction with SPRED1 and SPRY2. Required for TESK1-mediated dephosphorylation of SPRY2 and SPRY2 inhibition of ERK phosphorylation stretch occupies residues 528–627 (QGWAREPWNR…PSLQLPGARS (100 aa)).

It belongs to the protein kinase superfamily. TKL Ser/Thr protein kinase family. As to quaternary structure, interacts (via both C- and N-termini) with SPRY4 (via C-terminus); the interaction inhibits TESK1 kinase activity. Interacts with TAOK1; the interaction inhibits TAOK1 kinase activity. Interacts (via C-terminus) with SPRED1 (via C-terminus); the interaction inhibits TESK1 kinase activity. Interacts (via C-terminus) with PARVA/PARVIN (via C-terminus); the interaction inhibits TESK1 kinase activity. Interacts with YWHAB/14-3-3 beta; the interaction is dependent on the phosphorylation of TESK1 Ser-439 and inhibits TESK1 kinase activity. Interacts with SPRY1, SPRY3 and SPRED2. Interacts (via C-terminus) with SPRY2 (via C-terminus); the interaction disrupts SPRY2 interaction with PPP2CA/PP2A-C, possibly by vesicular sequestration of SPRY2. Therefore dephosphorylation of SPRY2 by the serine/threonine-protein phosphatase 2A (PP2A) holoenzyme is lost, inhibiting its interaction with GRB2. Mg(2+) serves as cofactor. Mn(2+) is required as a cofactor. Post-translationally, autophosphorylated on serine and tyrosine residues. As to expression, expressed in testes and brain (at protein level).

Its subcellular location is the cytoplasm. It localises to the perinuclear region. The protein resides in the cytoskeleton. The protein localises to the microtubule organizing center. It is found in the centrosome. Its subcellular location is the cell projection. It localises to the lamellipodium. It carries out the reaction L-seryl-[protein] + ATP = O-phospho-L-seryl-[protein] + ADP + H(+). The catalysed reaction is L-threonyl-[protein] + ATP = O-phospho-L-threonyl-[protein] + ADP + H(+). It catalyses the reaction L-tyrosyl-[protein] + ATP = O-phospho-L-tyrosyl-[protein] + ADP + H(+). Its activity is regulated as follows. Activated by autophosphorylation on Ser-215. Kinase activity is inhibited by SPRED1. Functionally, dual specificity protein kinase activity catalyzing autophosphorylation and phosphorylation of exogenous substrates on both serine/threonine and tyrosine residues. Regulates the cellular cytoskeleton by enhancing actin stress fiber formation via phosphorylation of cofilin and by preventing microtubule breakdown via inhibition of TAOK1/MARKK kinase activity. Inhibits podocyte motility via regulation of actin cytoskeletal dynamics and phosphorylation of CFL1. Positively regulates integrin-mediated cell spreading, via phosphorylation of cofilin. Suppresses ciliogenesis via multiple pathways; phosphorylation of CFL1, suppression of ciliary vesicle directional trafficking to the ciliary base, and by facilitating YAP1 nuclear localization where it acts as a transcriptional corepressor of the TEAD4 target genes AURKA and PLK1. Probably plays a central role at and after the meiotic phase of spermatogenesis. The sequence is that of Dual specificity testis-specific protein kinase 1 (Tesk1) from Mus musculus (Mouse).